The following is a 1582-amino-acid chain: ATP-binding cassette sub-family C member 8 (1582 aa).

Over 1–30 (MPLAFCGTENHSAAYRVDQGVLNNGCFVDA) the chain is Extracellular. A disulfide bridge links C6 with C26. N10 carries an N-linked (GlcNAc...) asparagine glycan. A helical transmembrane segment spans residues 31-47 (LNVVPHVFLLFITFPIL). Residues 48-72 (FIGWGSQSSKVHIHHSTWLHFPGHN) are Cytoplasmic-facing. The chain crosses the membrane as a helical span at residues 73-89 (LRWILTFILLFVLVCEI). Topologically, residues 90-106 (AEGILSDGVTESRHLHL) are extracellular. A helical membrane pass occupies residues 107 to 123 (YMPAGMAFMAAITSVVY). Residues 124 to 136 (YHNIETSNFPKLL) are Cytoplasmic-facing. The helical transmembrane segment at 137-153 (IALLIYWTLAFITKTIK) threads the bilayer. The Extracellular portion of the chain corresponds to 154–169 (FVKFYDHAIGFSQLRF). The helical transmembrane segment at 170 to 186 (CLTGLLVILYGMLLLVE) threads the bilayer. At 187–303 (VNVIRVRRYV…AFGRRLVLSS (117 aa)) the chain is on the cytoplasmic side. Positions 299 to 602 (LVLSSTFRIL…LSSVVRSTVK (304 aa)) constitute an ABC transmembrane type-1 1 domain. A helical transmembrane segment spans residues 304-319 (TFRILADLLGFAGPLC). Topologically, residues 320-356 (IFGIVDHLGKENHVFQPKTQFLGVYFVSSQEFLGNAY) are extracellular. Residues 357–372 (VLAVLLFLALLLQRTF) form a helical membrane-spanning segment. At 373–438 (LQASYYVAIE…MWFFFLCPNL (66 aa)) the chain is on the cytoplasmic side. Residues 439–454 (WAMPVQIIVGVILLYY) traverse the membrane as a helical segment. Residues 455-460 (ILGVSA) lie on the Extracellular side of the membrane. Residues 461-473 (LIGAAVIILLAPV) traverse the membrane as a helical segment. Residues 474 to 541 (QYFVATKLSQ…SLRAFAVYTS (68 aa)) are Cytoplasmic-facing. The helical transmembrane segment at 542–557 (ISIFMNTAIPIAAVLI) threads the bilayer. The Extracellular portion of the chain corresponds to 558–576 (TFVGHVSFFKESDFSPSVA). Residues 577–592 (FASLSLFHILVTPLFL) form a helical membrane-spanning segment. Residues 593–1013 (LSSVVRSTVK…YLSSAGILLL (421 aa)) are Cytoplasmic-facing. Residues 679 to 930 (VQIIGGFFTW…ECQLFEHWKT (252 aa)) enclose the ABC transporter 1 domain. Residues W688, G716, S720, and S721 each coordinate ATP. Position 720 (S720) interacts with Mg(2+). A disordered region spans residues 741-768 (SSLPDSEGEDPSNPERETAADSDARSRG). Over residues 753–766 (NPERETAADSDARS) the composition is skewed to basic and acidic residues. Position 775 (Q775) interacts with Mg(2+). Positions 939–950 (LEKETVMERKAP) are enriched in basic and acidic residues. A disordered region spans residues 939–962 (LEKETVMERKAPEPSQGLPRAMSS). The region spanning 1013 to 1307 (LSLLVFSQLL…MVRNLADMEI (295 aa)) is the ABC transmembrane type-1 2 domain. The chain crosses the membrane as a helical span at residues 1014–1031 (SLLVFSQLLKHMVLVAID). The Extracellular segment spans residues 1032–1067 (YWLAKWTDSALVLSPAARNCSLSQECALDQSVYAMV). N1050 carries N-linked (GlcNAc...) asparagine glycosylation. A helical transmembrane segment spans residues 1068–1084 (FTVLCSLGIALCLVTSV). Over 1085–1143 (TVEWTGLKVAKRLHRSLLNRIILAPMRFFETTPLGSILNRFSSDCNTIDQHIPSTLECL) the chain is Cytoplasmic. Residues 1144–1161 (SRSTLLCVSALAVISYVT) form a helical membrane-spanning segment. Position 1162 (P1162) is a topological domain, extracellular. Residues 1163–1175 (VFLVALLPLAVVC) form a helical membrane-spanning segment. At 1176–1249 (YFIQKYFRVA…FLTAANRWLE (74 aa)) the chain is on the cytoplasmic side. The chain crosses the membrane as a helical span at residues 1250–1265 (VRMEYIGACVVLIAAA). Topologically, residues 1266–1281 (TSISNSLHRELSAGLV) are extracellular. A helical membrane pass occupies residues 1282 to 1297 (GLGLTYALMVSNYLNW). The Cytoplasmic segment spans residues 1298–1582 (MVRNLADMEI…VFASFVRADK (285 aa)). An ABC transporter 2 domain is found at 1345–1579 (IQIQNLSVRY…KDSVFASFVR (235 aa)). ADP is bound by residues T1381, G1382, G1384, K1385, S1386, and S1387. ATP is bound at residue S1483.

Belongs to the ABC transporter superfamily. ABCC family. Conjugate transporter (TC 3.A.1.208) subfamily. Forms an heterooctamer with KCNJ11; four ABCC8/SUR1 molecules interact with one KCNJ11 homotetramer.

The protein localises to the cell membrane. KATP channels are regulated by cytoplasmic ATP/ADP ratios; ATP inhibits the channel by closing the pore, while ADP activates the channel. Activated by phosphatidylinositol 4,5-biphosphate (PtdIns(4,5)P2). Its function is as follows. Regulator subunit of pancreatic ATP-sensitive potassium channel (KATP), playing a major role in the regulation of insulin release. In pancreatic cells, it forms KATP channels with KCNJ11; KCNJ11 forms the channel pore while ABCC8 is required for activation and regulation. This Rattus norvegicus (Rat) protein is ATP-binding cassette sub-family C member 8 (Abcc8).